Here is a 239-residue protein sequence, read N- to C-terminus: BURP domain-containing protein 6 (239 aa).

The first 19 residues, 1 to 19, serve as a signal peptide directing secretion; sequence MPGAIRDLINPVSSAASAS. The BURP domain occupies 28–239; sequence FFLEKDLFPG…PQDDMLWVRN (212 aa).

In terms of tissue distribution, expressed in leaves and shoot.

The sequence is that of BURP domain-containing protein 6 (BURP6) from Oryza sativa subsp. japonica (Rice).